The primary structure comprises 516 residues: Probable inactive beta-glucosidase 14 (516 aa).

Residues 1 to 23 (MAAAWLVVLLTVHRLLHLSGVSA) form the signal peptide. Residues glutamine 43, histidine 145, and 190 to 191 (NQ) contribute to the a beta-D-glucoside site. Asparagine 193 is a glycosylation site (N-linked (GlcNAc...) asparagine). Residues cysteine 210 and cysteine 217 are joined by a disulfide bond. Residues asparagine 221 and asparagine 270 are each glycosylated (N-linked (GlcNAc...) asparagine). A beta-D-glucoside is bound at residue tyrosine 334. A disulfide bond links cysteine 342 and cysteine 347. Residue glutamate 405 participates in a beta-D-glucoside binding. Glutamate 405 acts as the Nucleophile in catalysis. N-linked (GlcNAc...) asparagine glycosylation is found at asparagine 415 and asparagine 423. A beta-D-glucoside contacts are provided by residues tryptophan 454, 461–462 (EW), and phenylalanine 470.

Belongs to the glycosyl hydrolase 1 family. Expressed in flowers and endosperm.

This Oryza sativa subsp. japonica (Rice) protein is Probable inactive beta-glucosidase 14.